We begin with the raw amino-acid sequence, 575 residues long: Epsin-1 (575 aa).

Positions 8, 11, 25, 30, 63, and 73 each coordinate a 1,2-diacyl-sn-glycero-3-phospho-(1D-myo-inositol-4,5-bisphosphate). The ENTH domain occupies 12-144 (NIVHNYSEAE…RDEDRLREER (133 aa)). A disordered region spans residues 149 to 186 (KTKEKLAQTATASSAAVGSGPPPEAEQAWPQSSGEEEL). The span at 157–167 (TATASSAAVGS) shows a compositional bias: low complexity. UIM domains lie at 183-202 (EEEL…ADQP), 208-227 (EDDV…HDKE), and 233-252 (GDDL…TGGK). Disordered stretches follow at residues 264 to 283 (FTTP…ASVP) and 293 to 575 (SDPW…PFLL). 8 tandem repeats follow at residues 274-276 (DPW), 294-296 (DPW), 306-308 (DPW), 319-321 (DPW), 332-334 (DPW), 349-351 (DPW), 367-369 (DPW), and 377-379 (DPW). An 8 X 3 AA repeats of D-P-W region spans residues 274-379 (DPWGGPASVP…APAPAFSDPW (106 aa)). Residues 306–316 (DPWGGAAPTPA) show a composition bias toward low complexity. Positions 333–346 (PWGGTPAPAAGEGP) are enriched in low complexity. Low complexity predominate over residues 367 to 379 (DPWAPAPAFSDPW). Position 382 is a phosphoserine (Ser-382). Positions 401–410 (DEFSDFDRLR) match the [DE]-X(1,2)-F-X-X-[FL]-X-X-X-R motif motif. Phosphoserine occurs at positions 418 and 419. Phosphothreonine is present on Thr-420. Residues Ser-434, Ser-446, and Ser-453 each carry the phosphoserine modification. Over residues 453–467 (SPPPAATPTPTPPTR) the composition is skewed to pro residues. A phosphothreonine mark is found at Thr-459, Thr-463, and Thr-469. Ser-472 is modified (phosphoserine). Residue Thr-493 is modified to Phosphothreonine. A run of 2 repeats spans residues 501-503 (NPF) and 517-519 (NPF). The 3 X 3 AA repeats of N-P-F stretch occupies residues 501-573 (NPFLPSGAPA…GPPAPNTNPF (73 aa)). Omega-N-methylarginine is present on Arg-533. Residues 556–569 (GLPPMMPPGPPAPN) show a composition bias toward pro residues. The stretch at 571–573 (NPF) is repeat 3.

It belongs to the epsin family. In terms of assembly, monomer. Binds ITSN1. Binds clathrin, ZBTB16/ZNF145, AP2A1 and AP2A2. Binds ubiquitinated proteins. Interacts with RALBP1 in a complex also containing NUMB and TFAP2A during interphase and mitosis. Interacts with AP2B1. Interacts with UBQLN2. Interacts with REPS2; the interaction is direct. Interacts with EPS15; the interaction is direct. Interacts with ENTREP1. In terms of processing, ubiquitinated. Post-translationally, phosphorylated on serine and/or threonine residues in mitotic cells. Phosphorylation reduces interaction with REPS2, AP-2 and the membrane fraction. Depolarization of synaptosomes results in dephosphorylation. In terms of tissue distribution, ubiquitously expressed. Detected in liver, spleen and testis, and weakly in lung and thymus (at protein level).

The protein resides in the cytoplasm. It localises to the cell membrane. Its subcellular location is the nucleus. It is found in the membrane. The protein localises to the clathrin-coated pit. In terms of biological role, binds to membranes enriched in phosphatidylinositol 4,5-bisphosphate (PtdIns(4,5)P2). Modifies membrane curvature and facilitates the formation of clathrin-coated invaginations. Regulates receptor-mediated endocytosis. The chain is Epsin-1 (Epn1) from Rattus norvegicus (Rat).